The primary structure comprises 294 residues: MDEAEGNSEESGLIKQHRKEKRDLQAKIQSMKNSVPKNDKKRRKQLTEDIAKLEADLDVRHKEELEAFAQKQPEPTQVSGITNGVTSLDLGNEAPVQQPRQSKAQKRREKKAAQEKERDERIAEAEIANLSGARHLESQKLARILAERELQIRQIPSDGHCMYRAIEHQLRERGNDLTVANLRSQTADYMQNHAEDFLPFLTNSSTGDMYTQEEFLKYCTDIVNTPAWGGQLELRALSHILKTAIEVIQAESSPIVIGEEYSSKAITLVYMRHAYGLGEHYNSVELLDTSTENS.

Disordered stretches follow at residues 1–46 (MDEA…RKQL) and 67–120 (AFAQ…ERDE). Polar residues-rich tracts occupy residues 27–36 (KIQSMKNSVP) and 73–86 (PEPTQVSGITNGVT). Over residues 111–120 (KAAQEKERDE) the composition is skewed to basic and acidic residues. Residues 150 to 287 (LQIRQIPSDG…GEHYNSVELL (138 aa)) form the OTU domain. Residues 155–161 (IPSDGHC) form a cys-loop region. Asp-158 is a catalytic residue. Cys-161 serves as the catalytic Nucleophile. The segment at 222–232 (IVNTPAWGGQL) is variable-loop. Residues 270–280 (YMRHAYGLGEH) form a his-loop region. Residue His-280 is part of the active site.

The enzyme catalyses Thiol-dependent hydrolysis of ester, thioester, amide, peptide and isopeptide bonds formed by the C-terminal Gly of ubiquitin (a 76-residue protein attached to proteins as an intracellular targeting signal).. Functionally, deubiquitinating enzyme that may play a role in the ubiquitin-dependent regulation of different cellular processes. This Xenopus tropicalis (Western clawed frog) protein is Deubiquitinase OTUD6B (otud6b).